A 623-amino-acid chain; its full sequence is Zinc finger protein 131 (623 aa).

A BTB domain is found at T34–G98. The Nuclear localization signal 1 motif lies at T137–A148. C2H2-type zinc fingers lie at residues F261–H283, F288–H311, and H328–H350. Residues K289 and K295 each participate in a glycyl lysine isopeptide (Lys-Gly) (interchain with G-Cter in SUMO2) cross-link. The short motif at V317–H328 is the Nuclear localization signal 2 element. Residues F356 to G381 form a C2H2-type 4; degenerate zinc finger. 2 C2H2-type zinc fingers span residues Y392–H414 and N420–H443. Over residues N573–T617 the composition is skewed to basic and acidic residues. Residues N573 to E623 form a disordered region. A Glycyl lysine isopeptide (Lys-Gly) (interchain with G-Cter in SUMO) cross-link involves residue K601.

The protein belongs to the krueppel C2H2-type zinc-finger protein family. Monosumoylated at Lys-601 by CBX4 and UHRF2. Sumoylation may potentiate ZNF131 inhibition of estrogen signaling. Sumoylation does not interfere with ubiquitination. In terms of processing, ubiquitinated. In terms of tissue distribution, predominant expression is found in different brain areas such as the occipital and temporal lobe, the nucleus caudatus, hippocampus, and the cerebellum as well as in testis and thymus.

The protein resides in the nucleus. Functionally, plays a role during development and organogenesis as well as in the function of the adult central nervous system. May be involved in transcriptional regulation as a repressor of ESR1/ER-alpha signaling. The sequence is that of Zinc finger protein 131 (ZNF131) from Homo sapiens (Human).